The primary structure comprises 250 residues: Ubiquinone/menaquinone biosynthesis C-methyltransferase UbiE (250 aa).

Residues Thr-73, Asp-94, 122–123 (NA), and Ser-139 contribute to the S-adenosyl-L-methionine site.

It belongs to the class I-like SAM-binding methyltransferase superfamily. MenG/UbiE family.

It catalyses the reaction a 2-demethylmenaquinol + S-adenosyl-L-methionine = a menaquinol + S-adenosyl-L-homocysteine + H(+). It carries out the reaction a 2-methoxy-6-(all-trans-polyprenyl)benzene-1,4-diol + S-adenosyl-L-methionine = a 5-methoxy-2-methyl-3-(all-trans-polyprenyl)benzene-1,4-diol + S-adenosyl-L-homocysteine + H(+). Its pathway is quinol/quinone metabolism; menaquinone biosynthesis; menaquinol from 1,4-dihydroxy-2-naphthoate: step 2/2. The protein operates within cofactor biosynthesis; ubiquinone biosynthesis. In terms of biological role, methyltransferase required for the conversion of demethylmenaquinol (DMKH2) to menaquinol (MKH2) and the conversion of 2-polyprenyl-6-methoxy-1,4-benzoquinol (DDMQH2) to 2-polyprenyl-3-methyl-6-methoxy-1,4-benzoquinol (DMQH2). The sequence is that of Ubiquinone/menaquinone biosynthesis C-methyltransferase UbiE from Francisella philomiragia subsp. philomiragia (strain ATCC 25017 / CCUG 19701 / FSC 153 / O#319-036).